We begin with the raw amino-acid sequence, 395 residues long: Chalcone synthase 3 (395 aa).

At valine 2 the chain carries N-acetylvaline. Cysteine 169 is an active-site residue.

This sequence belongs to the thiolase-like superfamily. Chalcone/stilbene synthases family.

The catalysed reaction is (E)-4-coumaroyl-CoA + 3 malonyl-CoA + 3 H(+) = 2',4,4',6'-tetrahydroxychalcone + 3 CO2 + 4 CoA. It participates in secondary metabolite biosynthesis; flavonoid biosynthesis. The primary product of this enzyme is 4,2',4',6'-tetrahydroxychalcone (also termed naringenin-chalcone or chalcone) which can under specific conditions spontaneously isomerize into naringenin. This chain is Chalcone synthase 3 (CHS3), found in Sinapis alba (White mustard).